The sequence spans 152 residues: MDIPRSLRHPEILLVLLLSEITDICQAYCEADCKSYCCDGTPPYCCSYYAYIGNVLSGTAIAGIVFGIVFIMGVIAGIAICICMCMKSSRGTRVGVIRTTHINAISSYPAAPPPYSYEYEMDFPLDLPPPYTPTPPMSHYPSPPPYPGPSRK.

The first 27 residues, 1–27, serve as a signal peptide directing secretion; it reads MDIPRSLRHPEILLVLLLSEITDICQA. Over 28–59 the chain is Extracellular; the sequence is YCEADCKSYCCDGTPPYCCSYYAYIGNVLSGT. A helical transmembrane segment spans residues 60-80; sequence AIAGIVFGIVFIMGVIAGIAI. The Cytoplasmic portion of the chain corresponds to 81–152; the sequence is CICMCMKSSR…PPPYPGPSRK (72 aa). The segment at 130–152 is disordered; the sequence is PYTPTPPMSHYPSPPPYPGPSRK.

Belongs to the CYYR1 family.

It localises to the membrane. The protein is Cysteine and tyrosine-rich protein 1 (cyyr1) of Xenopus laevis (African clawed frog).